Here is a 305-residue protein sequence, read N- to C-terminus: Elongation factor Ts, mitochondrial (305 aa).

Belongs to the EF-Ts family.

It localises to the mitochondrion. Associates with the EF-Tu.GDP complex and induces the exchange of GDP to GTP. It remains bound to the aminoacyl-tRNA.EF-Tu.GTP complex up to the GTP hydrolysis stage on the ribosome. The protein is Elongation factor Ts, mitochondrial (tsfm) of Danio rerio (Zebrafish).